Consider the following 363-residue polypeptide: Fructose-bisphosphate aldolase (363 aa).

2 residues coordinate substrate: R56 and K147. The Proton acceptor role is filled by E188. K230 (schiff-base intermediate with dihydroxyacetone-P) is an active-site residue.

It belongs to the class I fructose-bisphosphate aldolase family.

It catalyses the reaction beta-D-fructose 1,6-bisphosphate = D-glyceraldehyde 3-phosphate + dihydroxyacetone phosphate. Its pathway is carbohydrate degradation; glycolysis; D-glyceraldehyde 3-phosphate and glycerone phosphate from D-glucose: step 4/4. The polypeptide is Fructose-bisphosphate aldolase (Schistosoma mansoni (Blood fluke)).